A 249-amino-acid chain; its full sequence is Deoxyribose-phosphate aldolase (249 aa).

Residue Asp109 is the Proton donor/acceptor of the active site. The active-site Schiff-base intermediate with acetaldehyde is Lys171. Lys200 (proton donor/acceptor) is an active-site residue.

Belongs to the DeoC/FbaB aldolase family. DeoC type 1 subfamily.

It is found in the cytoplasm. The catalysed reaction is 2-deoxy-D-ribose 5-phosphate = D-glyceraldehyde 3-phosphate + acetaldehyde. The protein operates within carbohydrate degradation; 2-deoxy-D-ribose 1-phosphate degradation; D-glyceraldehyde 3-phosphate and acetaldehyde from 2-deoxy-alpha-D-ribose 1-phosphate: step 2/2. Its function is as follows. Catalyzes a reversible aldol reaction between acetaldehyde and D-glyceraldehyde 3-phosphate to generate 2-deoxy-D-ribose 5-phosphate. This chain is Deoxyribose-phosphate aldolase, found in Klebsiella pneumoniae subsp. pneumoniae (strain ATCC 700721 / MGH 78578).